An 89-amino-acid polypeptide reads, in one-letter code: Myrmicitoxin(1)-Pr2a (89 aa).

The first 23 residues, 1–23 (MEIPKLLYIAVIAIGLSGSLTCA), serve as a signal peptide directing secretion. Positions 24-61 (TPLANPWADPEAEANPEAKAIAEATAEAIAEALAEPEP) are excised as a propeptide. An Asparagine amide modification is found at asparagine 88.

It belongs to the formicidae venom clade 1 family. As to expression, expressed by the venom gland.

It is found in the secreted. Functionally, vertebrate-selective toxin that causes pain by targeting voltage-gated sodium channels. The polypeptide is Myrmicitoxin(1)-Pr2a (Pogonomyrmex rugosus (Desert harvester ant)).